We begin with the raw amino-acid sequence, 56 residues long: Small ribosomal subunit protein uS14B (56 aa).

Zn(2+) is bound by residues C21 and C24. S25 carries the post-translational modification Phosphoserine. Zn(2+) is bound by residues C39 and C42.

Belongs to the universal ribosomal protein uS14 family. In terms of assembly, component of the small ribosomal subunit (SSU). Mature yeast ribosomes consist of a small (40S) and a large (60S) subunit. The 40S small subunit contains 1 molecule of ribosomal RNA (18S rRNA) and 33 different proteins (encoded by 57 genes). The large 60S subunit contains 3 rRNA molecules (25S, 5.8S and 5S rRNA) and 46 different proteins (encoded by 81 genes). Zn(2+) serves as cofactor.

Its subcellular location is the cytoplasm. Component of the ribosome, a large ribonucleoprotein complex responsible for the synthesis of proteins in the cell. The small ribosomal subunit (SSU) binds messenger RNAs (mRNAs) and translates the encoded message by selecting cognate aminoacyl-transfer RNA (tRNA) molecules. The large subunit (LSU) contains the ribosomal catalytic site termed the peptidyl transferase center (PTC), which catalyzes the formation of peptide bonds, thereby polymerizing the amino acids delivered by tRNAs into a polypeptide chain. The nascent polypeptides leave the ribosome through a tunnel in the LSU and interact with protein factors that function in enzymatic processing, targeting, and the membrane insertion of nascent chains at the exit of the ribosomal tunnel. This Saccharomyces cerevisiae (strain ATCC 204508 / S288c) (Baker's yeast) protein is Small ribosomal subunit protein uS14B.